Here is a 272-residue protein sequence, read N- to C-terminus: Shikimate dehydrogenase (NADP(+)) (272 aa).

Shikimate is bound by residues 14–16 and T61; that span reads SKS. Residue K65 is the Proton acceptor of the active site. E77 contacts NADP(+). Residues N86 and D102 each contribute to the shikimate site. NADP(+)-binding positions include 126 to 130, 149 to 154, and M213; these read GAGGA and NRTVSR. Residue Y215 coordinates shikimate. G237 lines the NADP(+) pocket.

This sequence belongs to the shikimate dehydrogenase family. Homodimer.

It catalyses the reaction shikimate + NADP(+) = 3-dehydroshikimate + NADPH + H(+). Its pathway is metabolic intermediate biosynthesis; chorismate biosynthesis; chorismate from D-erythrose 4-phosphate and phosphoenolpyruvate: step 4/7. Involved in the biosynthesis of the chorismate, which leads to the biosynthesis of aromatic amino acids. Catalyzes the reversible NADPH linked reduction of 3-dehydroshikimate (DHSA) to yield shikimate (SA). The chain is Shikimate dehydrogenase (NADP(+)) from Shigella sonnei (strain Ss046).